A 588-amino-acid polypeptide reads, in one-letter code: Neuropeptide-like 1 (588 aa).

Positions 1–179 are excised as a propeptide; sequence MQCIPKKTFM…DPEVLEYSPD (179 aa). The segment at 115–143 is disordered; it reads NGDLPITIQERESDNDDEEKRSASSSDNV. Residue Thr194 is modified to Threonine amide. Serine amide is present on residues Ser210, Ser227, and Ser244. Tyr260 is modified (tyrosine amide). Residue Glu281 is modified to Glutamic acid 1-amide. A propeptide spanning residues 285 to 299 is cleaved from the precursor; sequence SIASLARSGDWPSVA. At Tyr318 the chain carries Tyrosine amide. The propeptide occupies 321-588; the sequence is SLSDDREAPS…SNSHIAPRSM (268 aa). A disordered region spans residues 342–382; sequence GNSEGKENEWQATPFTVSEDLDEGKAKNRSNRRIEASQTRH.

Its subcellular location is the secreted. The chain is Neuropeptide-like 1 from Camponotus floridanus (Florida carpenter ant).